Here is a 273-residue protein sequence, read N- to C-terminus: Large ribosomal subunit protein uL2 (273 aa).

A disordered region spans residues 228–273 (VDHPHGGGEGKTSGGRHPVTPWGFPTKGKKTRKNKRTSKFIVKKRK). A compositionally biased stretch (basic residues) spans 254–273 (KGKKTRKNKRTSKFIVKKRK).

Belongs to the universal ribosomal protein uL2 family. In terms of assembly, part of the 50S ribosomal subunit. Forms a bridge to the 30S subunit in the 70S ribosome.

Its function is as follows. One of the primary rRNA binding proteins. Required for association of the 30S and 50S subunits to form the 70S ribosome, for tRNA binding and peptide bond formation. It has been suggested to have peptidyltransferase activity; this is somewhat controversial. Makes several contacts with the 16S rRNA in the 70S ribosome. The chain is Large ribosomal subunit protein uL2 from Rickettsia rickettsii (strain Iowa).